The sequence spans 305 residues: Ribosomal RNA small subunit methyltransferase H (305 aa).

Residues 47 to 49, Asp66, Phe93, Asp108, and Gln115 contribute to the S-adenosyl-L-methionine site; that span reads GGH. The segment at 280–305 is disordered; it reads ASAEEQERNPRSRSAKLRIARKRSES. The segment covering 290-305 has biased composition (basic residues); that stretch reads RSRSAKLRIARKRSES.

Belongs to the methyltransferase superfamily. RsmH family.

It is found in the cytoplasm. It carries out the reaction cytidine(1402) in 16S rRNA + S-adenosyl-L-methionine = N(4)-methylcytidine(1402) in 16S rRNA + S-adenosyl-L-homocysteine + H(+). In terms of biological role, specifically methylates the N4 position of cytidine in position 1402 (C1402) of 16S rRNA. The sequence is that of Ribosomal RNA small subunit methyltransferase H from Synechococcus sp. (strain WH7803).